Consider the following 408-residue polypeptide: MVKVNGNYLKLKAGYLFPEIGRRVKAFSSANPEAQLIRLGIGDVTEPLPQACRDAMKSAIDEMGTAEGFHGYGPEQGYAWLREAIARDDFQARGCEISAEEIFVSDGSKCDSSNILDILGSGNRIAVTDPVYPVYVDSNVMAGRTGESGDDGRYGGLTYLPISADNGFAAQIPSEPVDLIYLCYPNNPTGAVATKAQLKKWVDYARANKALILFDAAYEAFIQDPELPHSIYEIEGARDCAIEFRSFSKNAGFTGTRCALTVVPKGLKGKADDGSEVELWGLWNRRQSTKFNGVSYIIQRGAEAVYSDAGKQEVKALVSFYMENAAIIRRELSAAGIEVHGGQHAPYVWLKTPSGMDSWSFFDHLLQKANVVGTPGSGFGAAGEGYFRLSAFNSRSNVDEAMARIRNL.

Tyr-15 and Gly-42 together coordinate substrate. Pyridoxal 5'-phosphate is bound by residues Tyr-72, 108–109 (SK), Tyr-132, Asn-187, Tyr-218, and 246–248 (SFS). Substrate is bound by residues Lys-109, Tyr-132, and Asn-187. Lys-249 carries the N6-(pyridoxal phosphate)lysine modification. Arg-257 and Asn-292 together coordinate pyridoxal 5'-phosphate. Positions 292 and 388 each coordinate substrate.

This sequence belongs to the class-I pyridoxal-phosphate-dependent aminotransferase family. LL-diaminopimelate aminotransferase subfamily. In terms of assembly, homodimer. Pyridoxal 5'-phosphate serves as cofactor.

It carries out the reaction (2S,6S)-2,6-diaminopimelate + 2-oxoglutarate = (S)-2,3,4,5-tetrahydrodipicolinate + L-glutamate + H2O + H(+). It participates in amino-acid biosynthesis; L-lysine biosynthesis via DAP pathway; LL-2,6-diaminopimelate from (S)-tetrahydrodipicolinate (aminotransferase route): step 1/1. Functionally, involved in the synthesis of meso-diaminopimelate (m-DAP or DL-DAP), required for both lysine and peptidoglycan biosynthesis. Catalyzes the direct conversion of tetrahydrodipicolinate to LL-diaminopimelate. The chain is LL-diaminopimelate aminotransferase from Synechococcus sp. (strain CC9311).